The primary structure comprises 446 residues: ATP-dependent RNA helicase SUB2 (446 aa).

Residue S2 is modified to N-acetylserine. A phosphoserine mark is found at S13 and S37. The segment covering 23–41 has biased composition (low complexity); that stretch reads ASKAAEAGETGAATSATEG. A disordered region spans residues 23 to 52; sequence ASKAAEAGETGAATSATEGDNNNNTAAGDK. Positions 62 to 90 match the Q motif motif; the sequence is TGFKDFLLKPELSRAIIDCGFEHPSEVQQ. Residues 93–268 enclose the Helicase ATP-binding domain; it reads IPQSIHGTDV…RRFLQNPLEI (176 aa). 106–113 serves as a coordination point for ATP; that stretch reads AKSGLGKT. T169 is modified (phosphothreonine). A DECD box motif is present at residues 215–218; it reads DECD. Residues 280–441 form the Helicase C-terminal domain; that stretch reads GLQQYYIKLE…EFPEEGIDPS (162 aa).

This sequence belongs to the DEAD box helicase family. DECD subfamily. Component of the TREX complex composed of at least SUB2, TEX1, YRA1 and the four THO complex components: HPR1, MFT1, THO2 and THP1. Interacts with HPR1, YRA1, and YRA2. SUB2 may mediate the interaction between the THO complex and YRA1. Associates with growing mRNP complexes during transcription. This association requires the presence of HPR1. Also interacts with SAC3. Interacts with THO1 in the presence of RNA; this interaction facilitates RNA binding of SUB2.

The protein resides in the nucleus. The enzyme catalyses ATP + H2O = ADP + phosphate + H(+). Its function is as follows. ATP-binding RNA helicase component of the TREX complex involved in transcription elongation and required for the export of mRNA out of the nucleus. SUB2 also plays a role in pre-mRNA splicing and spliceosome assembly. May be involved in rDNA and telomeric silencing, and maintenance of genome integrity. Associates with THO1, which facilitates RNA binding of SUB2 and likely plays a role in mRNA export. The sequence is that of ATP-dependent RNA helicase SUB2 (SUB2) from Saccharomyces cerevisiae (strain ATCC 204508 / S288c) (Baker's yeast).